A 483-amino-acid chain; its full sequence is Regulatory protein ViaA (483 aa).

It belongs to the ViaA family. As to quaternary structure, homodimer. Interacts with RavA.

The protein resides in the cytoplasm. Its function is as follows. Component of the RavA-ViaA chaperone complex, which may act on the membrane to optimize the function of some of the respiratory chains. ViaA stimulates the ATPase activity of RavA. The polypeptide is Regulatory protein ViaA (Escherichia coli O81 (strain ED1a)).